Here is a 376-residue protein sequence, read N- to C-terminus: Bifunctional enzyme IspD/IspF (376 aa).

Residues methionine 1–arginine 220 form a 2-C-methyl-D-erythritol 4-phosphate cytidylyltransferase region. The segment at arginine 220 to alanine 376 is 2-C-methyl-D-erythritol 2,4-cyclodiphosphate synthase. 2 residues coordinate a divalent metal cation: aspartate 226 and histidine 228. Residues aspartate 226–histidine 228 and histidine 252–serine 253 contribute to the 4-CDP-2-C-methyl-D-erythritol 2-phosphate site. Residue histidine 260 coordinates a divalent metal cation. 4-CDP-2-C-methyl-D-erythritol 2-phosphate contacts are provided by residues aspartate 274–glycine 276, threonine 350–glutamate 353, phenylalanine 357, and arginine 360.

The protein in the N-terminal section; belongs to the IspD/TarI cytidylyltransferase family. IspD subfamily. This sequence in the C-terminal section; belongs to the IspF family. A divalent metal cation is required as a cofactor.

The catalysed reaction is 2-C-methyl-D-erythritol 4-phosphate + CTP + H(+) = 4-CDP-2-C-methyl-D-erythritol + diphosphate. It catalyses the reaction 4-CDP-2-C-methyl-D-erythritol 2-phosphate = 2-C-methyl-D-erythritol 2,4-cyclic diphosphate + CMP. It functions in the pathway isoprenoid biosynthesis; isopentenyl diphosphate biosynthesis via DXP pathway; isopentenyl diphosphate from 1-deoxy-D-xylulose 5-phosphate: step 2/6. The protein operates within isoprenoid biosynthesis; isopentenyl diphosphate biosynthesis via DXP pathway; isopentenyl diphosphate from 1-deoxy-D-xylulose 5-phosphate: step 4/6. Bifunctional enzyme that catalyzes the formation of 4-diphosphocytidyl-2-C-methyl-D-erythritol from CTP and 2-C-methyl-D-erythritol 4-phosphate (MEP) (IspD), and catalyzes the conversion of 4-diphosphocytidyl-2-C-methyl-D-erythritol 2-phosphate (CDP-ME2P) to 2-C-methyl-D-erythritol 2,4-cyclodiphosphate (ME-CPP) with a corresponding release of cytidine 5-monophosphate (CMP) (IspF). In Granulibacter bethesdensis (strain ATCC BAA-1260 / CGDNIH1), this protein is Bifunctional enzyme IspD/IspF.